We begin with the raw amino-acid sequence, 380 residues long: tRNA-specific 2-thiouridylase MnmA (380 aa).

Residues 9-16 and M35 each bind ATP; that span reads GVSGGVDS. The segment at 94–96 is interaction with target base in tRNA; the sequence is NPD. C99 acts as the Nucleophile in catalysis. C99 and C195 are joined by a disulfide. G123 contributes to the ATP binding site. Residues 145–147 form an interaction with tRNA region; that stretch reads KDQ. The active-site Cysteine persulfide intermediate is the C195. The tract at residues 308-309 is interaction with tRNA; that stretch reads RY.

The protein belongs to the MnmA/TRMU family.

It localises to the cytoplasm. The enzyme catalyses S-sulfanyl-L-cysteinyl-[protein] + uridine(34) in tRNA + AH2 + ATP = 2-thiouridine(34) in tRNA + L-cysteinyl-[protein] + A + AMP + diphosphate + H(+). Functionally, catalyzes the 2-thiolation of uridine at the wobble position (U34) of tRNA, leading to the formation of s(2)U34. This chain is tRNA-specific 2-thiouridylase MnmA, found in Stenotrophomonas maltophilia (strain R551-3).